Here is a 216-residue protein sequence, read N- to C-terminus: Maleylacetoacetate isomerase (216 aa).

N-acetylmethionine is present on M1. Residues 4-87 (GKPILYSYFR…YLEETRPIPR (84 aa)) enclose the GST N-terminal domain. Glutathione contacts are provided by residues 14–19 (SSCSWR) and Q45. K57 is modified (N6-succinyllysine). Residues V59, 71–72 (QS), Q111, and 115–117 (NLS) contribute to the glutathione site. The 121-residue stretch at 92–212 (DPQKRAIVRM…HPRRQPDTPA (121 aa)) folds into the GST C-terminal domain. T136 is subject to Phosphothreonine. Position 137 is a phosphoserine (S137). K177 carries the N6-succinyllysine modification. S181 bears the Phosphoserine mark.

Belongs to the GST superfamily. Zeta family. As to quaternary structure, homodimer. It depends on glutathione as a cofactor. In terms of tissue distribution, expressed in liver, kidney, seminal glands and breast.

Its subcellular location is the cytoplasm. The catalysed reaction is 4-maleylacetoacetate = 4-fumarylacetoacetate. It catalyses the reaction RX + glutathione = an S-substituted glutathione + a halide anion + H(+). Its pathway is amino-acid degradation; L-phenylalanine degradation; acetoacetate and fumarate from L-phenylalanine: step 5/6. Probable bifunctional enzyme showing minimal glutathione-conjugating activity with ethacrynic acid and 7-chloro-4-nitrobenz-2-oxa-1, 3-diazole and maleylacetoacetate isomerase activity. Also has low glutathione peroxidase activity with t-butyl and cumene hydroperoxides. Is able to catalyze the glutathione dependent oxygenation of dichloroacetic acid to glyoxylic acid. This chain is Maleylacetoacetate isomerase (Gstz1), found in Mus musculus (Mouse).